Consider the following 607-residue polypeptide: Glutamyl-tRNA(Gln) amidotransferase subunit E (607 aa).

This sequence belongs to the GatB/GatE family. GatE subfamily. Heterodimer of GatD and GatE.

The catalysed reaction is L-glutamyl-tRNA(Gln) + L-glutamine + ATP + H2O = L-glutaminyl-tRNA(Gln) + L-glutamate + ADP + phosphate + H(+). Functionally, allows the formation of correctly charged Gln-tRNA(Gln) through the transamidation of misacylated Glu-tRNA(Gln) in organisms which lack glutaminyl-tRNA synthetase. The reaction takes place in the presence of glutamine and ATP through an activated gamma-phospho-Glu-tRNA(Gln). The GatDE system is specific for glutamate and does not act on aspartate. The protein is Glutamyl-tRNA(Gln) amidotransferase subunit E of Pyrobaculum islandicum (strain DSM 4184 / JCM 9189 / GEO3).